The sequence spans 378 residues: MTKPAILALADGSIFRGEAIGADGQTVGEVVFNTAMTGYQEILTDPSYAQQIVTLTYPHIGNTGTTPEDAESDRVWSAGLVIRDLPLVASNWRNKMSLGDYLKANNVVAIAGIDTRRLTRILREKGAQNGCIMAGDNISEEAAIAAARGFPGLKGMDLAKEVSTKDTYEWRHSVWNLQTDSHPEIAASELPYHVVAYDYGVKVNILRMLVERGCRVTVVPAQTPASEVLAYKPDGVFLSNGPGDPEPCDYAIKAIKQVLETEVPVFGICLGHQLLALAAGAKTVKMGHGHHGANHPVQDLDTGVVMITSQNHGFAVDESTLPGNVRAIHKSLFDGTLQGIELTDKSAFSFQGHPEASPGPNDVAPLFDRFIDAMAKRR.

The CPSase stretch occupies residues 1 to 189 (MTKPAILALA…DSHPEIAASE (189 aa)). Residues Ser-47, Gly-241, and Gly-243 each contribute to the L-glutamine site. Residues 193 to 378 (HVVAYDYGVK…RFIDAMAKRR (186 aa)) form the Glutamine amidotransferase type-1 domain. The active-site Nucleophile is the Cys-269. Residues Leu-270, Gln-273, Asn-311, Gly-313, and Phe-314 each contribute to the L-glutamine site. Residues His-353 and Glu-355 contribute to the active site.

Belongs to the CarA family. Composed of two chains; the small (or glutamine) chain promotes the hydrolysis of glutamine to ammonia, which is used by the large (or ammonia) chain to synthesize carbamoyl phosphate. Tetramer of heterodimers (alpha,beta)4.

The catalysed reaction is hydrogencarbonate + L-glutamine + 2 ATP + H2O = carbamoyl phosphate + L-glutamate + 2 ADP + phosphate + 2 H(+). It catalyses the reaction L-glutamine + H2O = L-glutamate + NH4(+). It functions in the pathway amino-acid biosynthesis; L-arginine biosynthesis; carbamoyl phosphate from bicarbonate: step 1/1. The protein operates within pyrimidine metabolism; UMP biosynthesis via de novo pathway; (S)-dihydroorotate from bicarbonate: step 1/3. Functionally, small subunit of the glutamine-dependent carbamoyl phosphate synthetase (CPSase). CPSase catalyzes the formation of carbamoyl phosphate from the ammonia moiety of glutamine, carbonate, and phosphate donated by ATP, constituting the first step of 2 biosynthetic pathways, one leading to arginine and/or urea and the other to pyrimidine nucleotides. The small subunit (glutamine amidotransferase) binds and cleaves glutamine to supply the large subunit with the substrate ammonia. This chain is Carbamoyl phosphate synthase small chain, found in Pseudomonas syringae pv. tomato (strain ATCC BAA-871 / DC3000).